Consider the following 575-residue polypeptide: SH2B adapter protein 3 (575 aa).

Disordered stretches follow at residues 1-23 (MNGPALQPSSPSSAPSASPAAAP), 83-136 (RAPG…CSFQ), and 150-176 (SAGELPAAHTAAAPGTPGEAAETPARP). Position 13 is a phosphoserine (Ser13). Residues 83–93 (RAPGRDYRDTG) are compositionally biased toward basic and acidic residues. The segment covering 95–104 (GPPAKAEASP) has biased composition (low complexity). Phosphoserine occurs at positions 103, 120, and 150. The segment covering 152 to 174 (GELPAAHTAAAPGTPGEAAETPA) has biased composition (low complexity). Positions 194–307 (EALKEAVLRY…WMAELSECTG (114 aa)) constitute a PH domain. Residues 322–346 (ALEPSTSSSPRGSTDSLNQGASPGG) form a disordered region. Over residues 325–337 (PSTSSSPRGSTDS) the composition is skewed to low complexity. At Ser330 the chain carries Phosphoserine. Residues 364–462 (WFHGPISRVK…ACDVRLSSYV (99 aa)) form the SH2 domain. 2 disordered regions span residues 503 to 525 (SSGCPRGLSPEGLPGRSSPPEQI) and 546 to 575 (PVNRARDSDYEMDSSSRSHLRAIDNQYTPL).

Belongs to the SH2B adapter family. Binds to the tyrosine-phosphorylated TCR zeta chain via its SH2 domain. Post-translationally, tyrosine phosphorylated by LCK. As to expression, preferentially expressed by lymphoid cell lines.

In terms of biological role, links T-cell receptor activation signal to phospholipase C-gamma-1, GRB2 and phosphatidylinositol 3-kinase. The protein is SH2B adapter protein 3 (SH2B3) of Homo sapiens (Human).